The chain runs to 246 residues: Auxin-responsive protein IAA25 (246 aa).

The segment at 1-22 (MKSSSVAPRLKQERQDDCKFQE) is disordered. The span at 10-22 (LKQERQDDCKFQE) shows a compositional bias: basic and acidic residues. The EAR-like (transcriptional repression) motif lies at 28–32 (LELRL). The 96-residue stretch at 143-238 (TMFVKVNLEG…SVKRLYIAQD (96 aa)) folds into the PB1 domain.

This sequence belongs to the Aux/IAA family. As to quaternary structure, homodimers and heterodimers. In terms of tissue distribution, highly expressed in flowers. Expressed in roots and seedlings.

It is found in the nucleus. Aux/IAA proteins are short-lived transcriptional factors that function as repressors of early auxin response genes at low auxin concentrations. The sequence is that of Auxin-responsive protein IAA25 (IAA25) from Oryza sativa subsp. japonica (Rice).